An 832-amino-acid polypeptide reads, in one-letter code: SID1 transmembrane family member 2 (832 aa).

The first 15 residues, 1-15 (MIAWRLPLCVLLVAA), serve as a signal peptide directing secretion. The Extracellular segment spans residues 16–293 (VESHLGALGP…VSQAVTSEAY (278 aa)). N-linked (GlcNAc...) asparagine glycosylation is found at Asn-27, Asn-54, Asn-60, Asn-123, Asn-141, and Asn-165. The helical transmembrane segment at 294 to 314 (VGGMLFCLGIFLSFYLLTVLL) threads the bilayer. Residues 315-447 (ACWENWRQRK…DKRVLRKKYQ (133 aa)) lie on the Cytoplasmic side of the membrane. A phosphoserine mark is found at Ser-401, Ser-403, and Ser-404. The helical transmembrane segment at 448–468 (IYFWNIATIAVFYALPVVQLV) threads the bilayer. At 469–499 (ITYQTVVNVTGNQDICYYNFLCAHPLGNLSA) the chain is on the extracellular side. Residues Asn-476 and Asn-496 are each glycosylated (N-linked (GlcNAc...) asparagine). The chain crosses the membrane as a helical span at residues 500–520 (FNNILSNLGYILLGLLFLLII). Residues 521–546 (LQREINHNRALLRNDLYALECGIPKH) lie on the Cytoplasmic side of the membrane. The helical transmembrane segment at 547–567 (FGLFYAMGTALMMEGLLSACY) threads the bilayer. Over 568-605 (HVCPNYTNFQFDTSFMYMIAGLCMLKLYQKRHPDINAS) the chain is Extracellular. 2 N-linked (GlcNAc...) asparagine glycosylation sites follow: Asn-572 and Asn-603. The chain crosses the membrane as a helical span at residues 606 to 626 (AYSAYACLAIVIFFSVLGVVF). At 627 to 631 (GKGNT) the chain is on the cytoplasmic side. Residues 632 to 652 (AFWIVFSVIHIISTLLLSTQL) form a helical membrane-spanning segment. Topologically, residues 653–688 (YYMGRWKLDSGIFRRILHVLYTDCIRQCSGPLYTDR) are extracellular. A helical transmembrane segment spans residues 689–709 (MVLLVMGNIINWSLAAYGLIM). Over 710–715 (RPNDFA) the chain is Cytoplasmic. Residues 716–736 (SYLLAIGICNLLLYFAFYIIM) form a helical membrane-spanning segment. The Extracellular portion of the chain corresponds to 737-746 (KLRSGERIKL). The chain crosses the membrane as a helical span at residues 747–767 (IPLLCIVCTSVVWGFALFFFF). Over 768–796 (QGLSTWQKTPAESREHNRDCILLDFFDDH) the chain is Cytoplasmic. Residues 797-817 (DIWHFLSSIAMFGSFLVLLTL) form a helical membrane-spanning segment. At 818-832 (DDDLDTVQRDKIYVF) the chain is on the extracellular side.

It belongs to the SID1 family. Interacts with adapter protein complex 1 (AP-1) and AP-2, but not AP-3 and AP-4. Interacts with LAMP2. Post-translationally, glycosylated. In terms of tissue distribution, highly expressed in the liver, brain, kidney and intestine (at protein level).

It is found in the lysosome membrane. Its subcellular location is the cell membrane. In terms of biological role, mediates the translocation of RNA and DNA across the lysosomal membrane during RNA and DNA autophagy (RDA), a process in which RNA or DNA is directly imported into lysosomes in an ATP-dependent manner, and degraded. Involved in the uptake of single-stranded oligonucleotides by living cells, a process called gymnosis. In vitro, mediates the uptake of linear DNA more efficiently than that of circular DNA, but exhibits similar uptake efficacy toward RNA and DNA. Binds long double-stranded RNA (dsRNA) (500 - 700 base pairs), but not dsRNA shorter than 100 bp. The chain is SID1 transmembrane family member 2 (Sidt2) from Rattus norvegicus (Rat).